The chain runs to 55 residues: Large ribosomal subunit protein bL33 (55 aa).

It belongs to the bacterial ribosomal protein bL33 family.

The sequence is that of Large ribosomal subunit protein bL33 from Methylorubrum extorquens (strain CM4 / NCIMB 13688) (Methylobacterium extorquens).